The chain runs to 382 residues: Galactokinase (382 aa).

A substrate-binding site is contributed by 34–37 (EHTD). Position 124–130 (124–130 (GAGLSSS)) interacts with ATP. S130 and E162 together coordinate Mg(2+). Residue D174 is the Proton acceptor of the active site. Position 223 (Y223) interacts with substrate.

The protein belongs to the GHMP kinase family. GalK subfamily.

It is found in the cytoplasm. The enzyme catalyses alpha-D-galactose + ATP = alpha-D-galactose 1-phosphate + ADP + H(+). It participates in carbohydrate metabolism; galactose metabolism. Catalyzes the transfer of the gamma-phosphate of ATP to D-galactose to form alpha-D-galactose-1-phosphate (Gal-1-P). This Escherichia coli O157:H7 (strain EC4115 / EHEC) protein is Galactokinase.